The chain runs to 393 residues: Phosphoglycerate kinase (393 aa).

Substrate is bound by residues 21 to 23, R37, 60 to 63, R119, and R152; these read DFN and HLGR. Residues K202, G291, E322, and 348–351 contribute to the ATP site; that span reads GGDT.

It belongs to the phosphoglycerate kinase family. As to quaternary structure, monomer.

It is found in the cytoplasm. The enzyme catalyses (2R)-3-phosphoglycerate + ATP = (2R)-3-phospho-glyceroyl phosphate + ADP. Its pathway is carbohydrate degradation; glycolysis; pyruvate from D-glyceraldehyde 3-phosphate: step 2/5. The sequence is that of Phosphoglycerate kinase from Coprothermobacter proteolyticus (strain ATCC 35245 / DSM 5265 / OCM 4 / BT).